Consider the following 391-residue polypeptide: Casein kinase II subunit alpha 3 (391 aa).

The Protein kinase domain occupies Tyr-39–Phe-324. ATP-binding positions include Leu-45 to Val-53 and Lys-68. Asp-156 serves as the catalytic Proton acceptor.

Belongs to the protein kinase superfamily. Ser/Thr protein kinase family. CK2 subfamily. As to quaternary structure, heterotetramer composed of two catalytic subunits (alpha chain and/or alpha' chain) and two regulatory subunits (beta chains). Interacts with PML. As to expression, detected in blood platelets and megakaryocyte cell lines. Poorly expressed in lung. Highly expressed in lung tumor tissues.

The catalysed reaction is L-seryl-[protein] + ATP = O-phospho-L-seryl-[protein] + ADP + H(+). It carries out the reaction L-threonyl-[protein] + ATP = O-phospho-L-threonyl-[protein] + ADP + H(+). Its function is as follows. Probable catalytic subunit of a constitutively active serine/threonine-protein kinase complex that phosphorylates a large number of substrates containing acidic residues C-terminal to the phosphorylated serine or threonine. Amplification-dependent oncogene; promotes cell proliferation and tumorigenesis by down-regulating expression of the tumor suppressor protein, PML. May play a role in the pathogenesis of the lung cancer development and progression. The sequence is that of Casein kinase II subunit alpha 3 (CSNK2A3) from Homo sapiens (Human).